We begin with the raw amino-acid sequence, 262 residues long: Phosphatidylglycerol--prolipoprotein diacylglyceryl transferase (262 aa).

Helical transmembrane passes span 9–29 (LGPLAIRWYALCIVTGLILAV), 41–61 (IIPDDILDFILVAFPLAILGA), 80–100 (IFAIWNGGLAIYGGLITGALV), and 109–129 (LINTWDFLDIAAPSVMIAQSL). Residue Arg131 participates in a 1,2-diacyl-sn-glycero-3-phospho-(1'-sn-glycerol) binding. Transmembrane regions (helical) follow at residues 167 to 187 (QPTFLYESLWNLLGFALILIF), 197 to 217 (GHITAFYLIWYGFGRMVIEGM), and 227 to 247 (LRVSQWLSVVLIGLGIMIVIY).

Belongs to the Lgt family.

Its subcellular location is the cell membrane. The enzyme catalyses L-cysteinyl-[prolipoprotein] + a 1,2-diacyl-sn-glycero-3-phospho-(1'-sn-glycerol) = an S-1,2-diacyl-sn-glyceryl-L-cysteinyl-[prolipoprotein] + sn-glycerol 1-phosphate + H(+). It functions in the pathway protein modification; lipoprotein biosynthesis (diacylglyceryl transfer). Its function is as follows. Catalyzes the transfer of the diacylglyceryl group from phosphatidylglycerol to the sulfhydryl group of the N-terminal cysteine of a prolipoprotein, the first step in the formation of mature lipoproteins. The sequence is that of Phosphatidylglycerol--prolipoprotein diacylglyceryl transferase from Streptococcus pneumoniae (strain JJA).